An 87-amino-acid chain; its full sequence is uncharacterized protein (87 aa).

The tract at residues 67 to 87 (TGGDPREAVVRPADQVEGYTG) is disordered.

This is an uncharacterized protein from Mycobacterium bovis (strain ATCC BAA-935 / AF2122/97).